Consider the following 221-residue polypeptide: Small ribosomal subunit protein uS5 (221 aa).

The tract at residues 1–40 (MMAQRNSGAPDNAGGSNDGREGGRGRRDNRDDRRGGRDNA) is disordered. Positions 18–40 (DGREGGRGRRDNRDDRRGGRDNA) are enriched in basic and acidic residues. The region spanning 45-108 (YLERVVTINR…DEARKNFFRV (64 aa)) is the S5 DRBM domain.

This sequence belongs to the universal ribosomal protein uS5 family. In terms of assembly, part of the 30S ribosomal subunit. Contacts proteins S4 and S8.

With S4 and S12 plays an important role in translational accuracy. In terms of biological role, located at the back of the 30S subunit body where it stabilizes the conformation of the head with respect to the body. This Mycobacteroides abscessus (strain ATCC 19977 / DSM 44196 / CCUG 20993 / CIP 104536 / JCM 13569 / NCTC 13031 / TMC 1543 / L948) (Mycobacterium abscessus) protein is Small ribosomal subunit protein uS5.